The following is a 441-amino-acid chain: Signal recognition particle 54 kDa protein (441 aa).

GTP is bound by residues 104–111 (GLQGSGKT), 186–190 (DTAGR), and 244–247 (TKLD).

Belongs to the GTP-binding SRP family. SRP54 subfamily. As to quaternary structure, part of the signal recognition particle protein translocation system, which is composed of SRP and FtsY. Archaeal SRP consists of a 7S RNA molecule of 300 nucleotides and two protein subunits: SRP54 and SRP19.

The protein resides in the cytoplasm. It catalyses the reaction GTP + H2O = GDP + phosphate + H(+). Involved in targeting and insertion of nascent membrane proteins into the cytoplasmic membrane. Binds to the hydrophobic signal sequence of the ribosome-nascent chain (RNC) as it emerges from the ribosomes. The SRP-RNC complex is then targeted to the cytoplasmic membrane where it interacts with the SRP receptor FtsY. The sequence is that of Signal recognition particle 54 kDa protein from Staphylothermus marinus (strain ATCC 43588 / DSM 3639 / JCM 9404 / F1).